Here is a 92-residue protein sequence, read N- to C-terminus: Small ribosomal subunit protein uS19 (92 aa).

The protein belongs to the universal ribosomal protein uS19 family.

Functionally, protein S19 forms a complex with S13 that binds strongly to the 16S ribosomal RNA. This Psychromonas ingrahamii (strain DSM 17664 / CCUG 51855 / 37) protein is Small ribosomal subunit protein uS19.